The chain runs to 124 residues: Small ribosomal subunit protein uS12 (124 aa).

Position 89 is a 3-methylthioaspartic acid (D89).

This sequence belongs to the universal ribosomal protein uS12 family. As to quaternary structure, part of the 30S ribosomal subunit. Contacts proteins S8 and S17. May interact with IF1 in the 30S initiation complex.

In terms of biological role, with S4 and S5 plays an important role in translational accuracy. Its function is as follows. Interacts with and stabilizes bases of the 16S rRNA that are involved in tRNA selection in the A site and with the mRNA backbone. Located at the interface of the 30S and 50S subunits, it traverses the body of the 30S subunit contacting proteins on the other side and probably holding the rRNA structure together. The combined cluster of proteins S8, S12 and S17 appears to hold together the shoulder and platform of the 30S subunit. This is Small ribosomal subunit protein uS12 from Vibrio cholerae serotype O1 (strain ATCC 39315 / El Tor Inaba N16961).